Here is an 86-residue protein sequence, read N- to C-terminus: Apolipoprotein C-I (86 aa).

Residues 1 to 26 (MRLFLSLPVLVVALLMILEGPGPAQG) form the signal peptide.

Belongs to the apolipoprotein C1 family.

The protein localises to the secreted. Inhibitor of lipoprotein binding to the low density lipoprotein (LDL) receptor, LDL receptor-related protein, and very low density lipoprotein (VLDL) receptor. Associates with high density lipoproteins (HDL) and the triacylglycerol-rich lipoproteins in the plasma and makes up about 10% of the protein of the VLDL and 2% of that of HDL. Appears to interfere directly with fatty acid uptake and is also the major plasma inhibitor of cholesteryl ester transfer protein (CETP). Binds free fatty acids and reduces their intracellular esterification. Modulates the interaction of APOE with beta-migrating VLDL and inhibits binding of beta-VLDL to the LDL receptor-related protein. This chain is Apolipoprotein C-I (APOC1), found in Aotus nancymaae (Ma's night monkey).